The chain runs to 709 residues: Leucine-rich repeat and calponin homology domain-containing protein 1 (709 aa).

The segment covering 24–37 (LHQHHQHHQHHQHH) has biased composition (basic residues). Residues 24 to 49 (LHQHHQHHQHHQHHGGTGGTGFNLPL) are disordered. LRR repeat units lie at residues 60–83 (AANSGGLNLSARKLKEFPRTTAPG), 86–108 (LSDTVRADLSKNRLVEVPMELCQ), 109–131 (FVSLEILNLYHNCIRVIPEAIVN), 132–155 (LQMLTHLNLSRNQLSALPACLCGL), 157–176 (LKVLIASNNKLGSLPEEIGQ), 177–199 (LKQLMELDVSCNEITALPQQIGQ), 200–223 (LKSLRELNVRRNYLKVLPPELVDL), 225–244 (LVKFDFSCNKVLVIPVCFRE), and 245–268 (MKQLQVLLLENNPLQSPPAQICTK). Composition is skewed to basic and acidic residues over residues 301-312 (HQHVEDSKKDSD) and 381-390 (QEREQLAGRA). The interval 301-390 (HQHVEDSKKD…QEREQLAGRA (90 aa)) is disordered. A phosphoserine mark is found at Ser395, Ser518, and Ser522. A disordered region spans residues 504 to 526 (SNGSQYSPNEIRENSPSVSPTAN). Thr581 is subject to Phosphothreonine. The Calponin-homology (CH) domain maps to 589-702 (MREEKELVEQ…TTVQALLDVT (114 aa)).

In terms of assembly, interacts (via LRR repeats) with unphosphorylated DOCK8 (via DHR-2 domain); the interaction prevents the association between DOCK8 and CDC42.

The protein localises to the cytoplasm. Its function is as follows. Acts as a negative regulator of GTPase CDC42 by sequestering CDC42-guanine exchange factor DOCK8. Probably by preventing CDC42 activation, negatively regulates CD4(+) T-cell migration in response to chemokine stimulation. This is Leucine-rich repeat and calponin homology domain-containing protein 1 (Lrch1) from Mus musculus (Mouse).